Consider the following 452-residue polypeptide: NADH-quinone oxidoreductase subunit H (452 aa).

Transmembrane regions (helical) follow at residues 28–48 (IILIKALAVFVFLMLCVLMMI), 96–116 (VIYIAAPMIAAIPAFFAFSVI), 136–156 (LPVAVLLVLATASLGVYGIVL), 177–197 (VISYEIAMGLSFIAVFIYAGT), 210–230 (IWFAVILFPSFVIYLITMIGE), 264–286 (AEYVNMVTVSAMSVTLFLGGYLA), 301–321 (WWPALWWLIKFVCVMFLFVWV), 335–355 (KLGWKILIPIQLVWITAVAVI), and 366–386 (YVTAIVVGVFGLLVFLGLWAW).

This sequence belongs to the complex I subunit 1 family. In terms of assembly, NDH-1 is composed of 14 different subunits. Subunits NuoA, H, J, K, L, M, N constitute the membrane sector of the complex.

It localises to the cell membrane. The catalysed reaction is a quinone + NADH + 5 H(+)(in) = a quinol + NAD(+) + 4 H(+)(out). In terms of biological role, NDH-1 shuttles electrons from NADH, via FMN and iron-sulfur (Fe-S) centers, to quinones in the respiratory chain. The immediate electron acceptor for the enzyme in this species is believed to be ubiquinone. Couples the redox reaction to proton translocation (for every two electrons transferred, four hydrogen ions are translocated across the cytoplasmic membrane), and thus conserves the redox energy in a proton gradient. This subunit may bind ubiquinone. The sequence is that of NADH-quinone oxidoreductase subunit H from Thermobifida fusca (strain YX).